A 903-amino-acid chain; its full sequence is Calcium-activated chloride channel regulator 1 (903 aa).

Residues methionine 1–serine 21 form the signal peptide. Residues aspartate 45–lysine 199 are metalloprotease domain. Histidine 155 contacts Zn(2+). The active site involves glutamate 156. Zn(2+) is bound by residues histidine 159 and aspartate 166. The VWFA domain maps to valine 308–isoleucine 476. N-linked (GlcNAc...) asparagine glycans are attached at residues asparagine 360, asparagine 372, asparagine 504, and asparagine 842. The helical transmembrane segment at glycine 883–valine 903 threads the bilayer.

The protein belongs to the CLCR family. Glycosylated. In terms of processing, the 125-kDa product is autoproteolytically processed by the metalloprotease domain and yields to two cell-surface-associated subunits, a 90-kDa protein and a group of 37- to 41-kDa proteins. The cleavage is necessary for calcium-activated chloride channel (CaCC) activation activity. As to expression, trachea.

Its subcellular location is the apical cell membrane. Functionally, may be involved in mediating calcium-activated chloride conductance. May play critical roles in goblet cell metaplasia, mucus hypersecretion, cystic fibrosis and AHR. May be involved in the regulation of mucus production and/or secretion by goblet cells. Involved in the regulation of tissue inflammation in the innate immune response. May play a role as a tumor suppressor. Induces MUC5AC. The polypeptide is Calcium-activated chloride channel regulator 1 (Bos taurus (Bovine)).